A 312-amino-acid polypeptide reads, in one-letter code: Ribosomal protein L11 methyltransferase (312 aa).

Residues Thr-163, Gly-184, Asp-206, and Asn-248 each contribute to the S-adenosyl-L-methionine site.

It belongs to the methyltransferase superfamily. PrmA family.

Its subcellular location is the cytoplasm. It catalyses the reaction L-lysyl-[protein] + 3 S-adenosyl-L-methionine = N(6),N(6),N(6)-trimethyl-L-lysyl-[protein] + 3 S-adenosyl-L-homocysteine + 3 H(+). In terms of biological role, methylates ribosomal protein L11. This is Ribosomal protein L11 methyltransferase from Clostridium kluyveri (strain NBRC 12016).